The following is a 425-amino-acid chain: Serine--tRNA ligase (425 aa).

Residue 231–233 (TAE) participates in L-serine binding. 262–264 (RSE) is a binding site for ATP. Glu-285 contributes to the L-serine binding site. 349–352 (EISS) provides a ligand contact to ATP. Position 385 (Ser-385) interacts with L-serine.

The protein belongs to the class-II aminoacyl-tRNA synthetase family. Type-1 seryl-tRNA synthetase subfamily. In terms of assembly, homodimer. The tRNA molecule binds across the dimer.

The protein localises to the cytoplasm. The catalysed reaction is tRNA(Ser) + L-serine + ATP = L-seryl-tRNA(Ser) + AMP + diphosphate + H(+). The enzyme catalyses tRNA(Sec) + L-serine + ATP = L-seryl-tRNA(Sec) + AMP + diphosphate + H(+). It functions in the pathway aminoacyl-tRNA biosynthesis; selenocysteinyl-tRNA(Sec) biosynthesis; L-seryl-tRNA(Sec) from L-serine and tRNA(Sec): step 1/1. In terms of biological role, catalyzes the attachment of serine to tRNA(Ser). Is also able to aminoacylate tRNA(Sec) with serine, to form the misacylated tRNA L-seryl-tRNA(Sec), which will be further converted into selenocysteinyl-tRNA(Sec). In Bartonella henselae (strain ATCC 49882 / DSM 28221 / CCUG 30454 / Houston 1) (Rochalimaea henselae), this protein is Serine--tRNA ligase.